Consider the following 122-residue polypeptide: Interferon alpha-inducible protein 27, mitochondrial (122 aa).

A mitochondrion-targeting transit peptide spans 1–33; sequence MEASALTSSAVTSVAKVVRVASGSAVVLPLARI. Residues 34–57 form a helical membrane-spanning segment; the sequence is ATVVIGGVVAMAAVPMVLSAMGFT. A Glycyl lysine isopeptide (Lys-Gly) (interchain with G-Cter in ubiquitin) cross-link involves residue Lys-69. 2 consecutive transmembrane segments (helical) span residues 71–91 and 99–119; these read MSAA…VATL and LSGL…AVIA. The segment at 76–122 is mediates interaction with SKP2 and hepatitis C virus non-structural protein NS5A; sequence IANGGGVASGSLVATLQSLGATGLSGLTKFILGSIGSAIAAVIARFY. Positions 103-112 are required for hepatitis C virus non-structural protein NS5A degradation; sequence TKFILGSIGS.

It belongs to the IFI6/IFI27 family. Homodimer. Interacts with hepatitis C virus/HCV non-structural protein NS5A; promotes the ubiquitin-mediated proteasomal degradation of NS5A. Interacts with SKP2; promotes the ubiquitin-mediated proteasomal degradation of NS5A. Interacts with NR4A1. May interact with BCL2. Post-translationally, ubiquitinated by TRIM21 via 'Lys-6'-linked ubiquitin chains leading to IFI27 mitochondrial migration.

The protein resides in the mitochondrion membrane. It is found in the nucleus inner membrane. The protein localises to the endoplasmic reticulum membrane. Functionally, probable adapter protein involved in different biological processes. Part of the signaling pathways that lead to apoptosis. Involved in type-I interferon-induced apoptosis characterized by a rapid and robust release of cytochrome C from the mitochondria and activation of BAX and caspases 2, 3, 6, 8 and 9. Also functions in TNFSF10-induced apoptosis. May also have a function in the nucleus, where it may be involved in the interferon-induced negative regulation of the transcriptional activity of NR4A1, NR4A2 and NR4A3 through the enhancement of XPO1-mediated nuclear export of these nuclear receptors. May thereby play a role in the vascular response to injury. In the innate immune response, has an antiviral activity towards hepatitis C virus/HCV. May prevent the replication of the virus by recruiting both the hepatitis C virus non-structural protein 5A/NS5A and the ubiquitination machinery via SKP2, promoting the ubiquitin-mediated proteasomal degradation of NS5A. Also promotes virus-induced pyroptosis by activating CASP3 in the mitochondria after 'Lys-6'-linked ubiquitination by TRIM21. The chain is Interferon alpha-inducible protein 27, mitochondrial from Homo sapiens (Human).